Here is a 274-residue protein sequence, read N- to C-terminus: MQAATSRESYRIAGDRLDAYVRGAEPSAVAATADELLSVADLIRREPRLRRALADPARSGADRAALLTGILSGKVGADALDLSTTLVAGRWSAPSELLDGAERLGVAALLAAADKAGDLGEVEDELFRFGQVVAGQSALSNALSDPAAPVEQRATLAGELLTGKARPVTVRLVEVALGGFGGRSFVGALTRLVELAADRRDRQVAYVTVAAPLGEEEERRLGASLSAIYGREVSVKQSVDPEVLGGVSVRVGSDLYDGTVLRRLNETRNALAKR.

This sequence belongs to the ATPase delta chain family. F-type ATPases have 2 components, F(1) - the catalytic core - and F(0) - the membrane proton channel. F(1) has five subunits: alpha(3), beta(3), gamma(1), delta(1), epsilon(1). F(0) has three main subunits: a(1), b(2) and c(10-14). The alpha and beta chains form an alternating ring which encloses part of the gamma chain. F(1) is attached to F(0) by a central stalk formed by the gamma and epsilon chains, while a peripheral stalk is formed by the delta and b chains.

Its subcellular location is the cell membrane. Its function is as follows. F(1)F(0) ATP synthase produces ATP from ADP in the presence of a proton or sodium gradient. F-type ATPases consist of two structural domains, F(1) containing the extramembraneous catalytic core and F(0) containing the membrane proton channel, linked together by a central stalk and a peripheral stalk. During catalysis, ATP synthesis in the catalytic domain of F(1) is coupled via a rotary mechanism of the central stalk subunits to proton translocation. This protein is part of the stalk that links CF(0) to CF(1). It either transmits conformational changes from CF(0) to CF(1) or is implicated in proton conduction. The sequence is that of ATP synthase subunit delta from Salinispora arenicola (strain CNS-205).